A 301-amino-acid chain; its full sequence is Ribonuclease Z (301 aa).

Zn(2+) contacts are provided by histidine 61, histidine 63, aspartate 65, histidine 66, histidine 140, aspartate 211, and histidine 269. The active-site Proton acceptor is aspartate 65.

Belongs to the RNase Z family. In terms of assembly, homodimer. It depends on Zn(2+) as a cofactor.

The catalysed reaction is Endonucleolytic cleavage of RNA, removing extra 3' nucleotides from tRNA precursor, generating 3' termini of tRNAs. A 3'-hydroxy group is left at the tRNA terminus and a 5'-phosphoryl group is left at the trailer molecule.. Zinc phosphodiesterase, which displays some tRNA 3'-processing endonuclease activity. Probably involved in tRNA maturation, by removing a 3'-trailer from precursor tRNA. The protein is Ribonuclease Z of Bradyrhizobium diazoefficiens (strain JCM 10833 / BCRC 13528 / IAM 13628 / NBRC 14792 / USDA 110).